We begin with the raw amino-acid sequence, 438 residues long: MGNKPTIAISHLGCEKNRIDSEHMLGLLAQAGYPVDANEELADYVIVNTCSFIQSAREESVRTLVELAEANKKVIISGCMAQHFQDELLSELPEAVAIVGTGDYQKIVQVIQRVENGQRVKEISSEPTYIADETVPRYRTTSEGVAYLRVAEGCDYRCSFCIIPHLRGNQRSRTIESIVREAQQLADQGVQELILISQITTNYGLDLYGEPKLAQLLQALGEVDIPWIRIHYAYPTGLTPKVIEAIRETPNVLPYLDLPLQHSHPDILKRMNRPWQGRVNDSIIERIKDAIPKAVLRTTFIVGFPGETEEHYAHLVEFVKRHEFDHVGVFTFSPEEETPAYHMANQIPQEIMEQRRDTIMQIQQPISLQKNCACIGDIVDVLIEQENPDTGQFIGRSARFAPEVDGLVYVEGEASLGTIIPVKIKDADIYDLYGEVIN.

One can recognise an MTTase N-terminal domain in the interval 5 to 116; sequence PTIAISHLGC…IVQVIQRVEN (112 aa). [4Fe-4S] cluster is bound by residues Cys-14, Cys-50, Cys-79, Cys-154, Cys-158, and Cys-161. Residues 140–369 form the Radical SAM core domain; the sequence is TTSEGVAYLR…MQIQQPISLQ (230 aa). One can recognise a TRAM domain in the interval 372–438; the sequence is CACIGDIVDV…IYDLYGEVIN (67 aa).

Belongs to the methylthiotransferase family. RimO subfamily. [4Fe-4S] cluster is required as a cofactor.

It is found in the cytoplasm. It carries out the reaction L-aspartate(89)-[ribosomal protein uS12]-hydrogen + (sulfur carrier)-SH + AH2 + 2 S-adenosyl-L-methionine = 3-methylsulfanyl-L-aspartate(89)-[ribosomal protein uS12]-hydrogen + (sulfur carrier)-H + 5'-deoxyadenosine + L-methionine + A + S-adenosyl-L-homocysteine + 2 H(+). Its function is as follows. Catalyzes the methylthiolation of an aspartic acid residue of ribosomal protein uS12. The protein is Ribosomal protein uS12 methylthiotransferase RimO of Gloeothece citriformis (strain PCC 7424) (Cyanothece sp. (strain PCC 7424)).